A 192-amino-acid polypeptide reads, in one-letter code: 7-methyl-GTP pyrophosphatase (192 aa).

The Proton acceptor role is filled by aspartate 69.

The protein belongs to the Maf family. YceF subfamily. A divalent metal cation is required as a cofactor.

It localises to the cytoplasm. The catalysed reaction is N(7)-methyl-GTP + H2O = N(7)-methyl-GMP + diphosphate + H(+). In terms of biological role, nucleoside triphosphate pyrophosphatase that hydrolyzes 7-methyl-GTP (m(7)GTP). May have a dual role in cell division arrest and in preventing the incorporation of modified nucleotides into cellular nucleic acids. The chain is 7-methyl-GTP pyrophosphatase (maf-1) from Pseudomonas syringae pv. tomato (strain ATCC BAA-871 / DC3000).